We begin with the raw amino-acid sequence, 208 residues long: Intraflagellar transport protein 43 homolog (208 aa).

The residue at position 1 (M1) is an N-acetylmethionine. Positions 18–65 are disordered; the sequence is SRAKMGRRAQQESAQAENHLNGKNSSLTLTGETSSAKLPRCRQGGWAG. The span at 28–53 shows a compositional bias: polar residues; the sequence is QESAQAENHLNGKNSSLTLTGETSSA. At S78 the chain carries Phosphoserine.

This sequence belongs to the IFT43 family. Component of the IFT complex A (IFT-A) complex. IFT-A complex is divided into a core subcomplex composed of IFT122:IFT140:WDR19 which is associated with TULP3 and a peripheral subcomplex composed of IFT43:WDR35:TTC21B. Interacts directy with IFT122, WDR35 and TTC21B. In terms of tissue distribution, expressed in the retina, predominantly in the photoreceptor outer segment.

The protein resides in the cytoplasm. It localises to the cytoskeleton. Its subcellular location is the cell projection. The protein localises to the cilium. In terms of biological role, as a component of IFT complex A (IFT-A), a complex required for retrograde ciliary transport and entry into cilia of G protein-coupled receptors (GPCRs), it is involved in ciliogenesis. Involved in retrograde ciliary transport along microtubules from the ciliary tip to the base. In Homo sapiens (Human), this protein is Intraflagellar transport protein 43 homolog.